Here is a 405-residue protein sequence, read N- to C-terminus: Cytoplasmic tRNA 2-thiolation protein 2 (405 aa).

This sequence belongs to the CTU2/NCS2 family.

It is found in the cytoplasm. It participates in tRNA modification; 5-methoxycarbonylmethyl-2-thiouridine-tRNA biosynthesis. Its function is as follows. Plays a central role in 2-thiolation of mcm(5)S(2)U at tRNA wobble positions of tRNA(Lys), tRNA(Glu) and tRNA(Gln). May act by forming a heterodimer with NCS6/CTU1 that ligates sulfur from thiocarboxylated URM1 onto the uridine of tRNAs at wobble position. In Drosophila melanogaster (Fruit fly), this protein is Cytoplasmic tRNA 2-thiolation protein 2.